A 131-amino-acid chain; its full sequence is Small ribosomal subunit protein bS6 (131 aa).

A disordered region spans residues 98 to 131 (EASPMARARDERDSRRGPAGERSYDEAHAEEIGE). The span at 104–131 (RARDERDSRRGPAGERSYDEAHAEEIGE) shows a compositional bias: basic and acidic residues.

This sequence belongs to the bacterial ribosomal protein bS6 family.

Binds together with bS18 to 16S ribosomal RNA. The protein is Small ribosomal subunit protein bS6 of Shewanella putrefaciens (strain CN-32 / ATCC BAA-453).